Consider the following 613-residue polypeptide: MPKYRSSTTTQGRNMAGARALWKATGMTDSDFNKPIIAVVNSFTEFVPGHIHLKELGTLVSSIIKLEGGVAKEFNTIAIDDGIAMGHSGMLYSLPSRELIADSIEYMINAHCADAMICISNCDKITPGMLMAALRLNIPCVFVSGGPMESGRIVVDGKEIKINLVDAIVYGANPNYSDALASRIENCACPTCGSCSGLFTANSMNCLTEALGLSLPGNGTLLATHIDRKKLFIDSGKLIVKITKEYYEDNNTSFLPRSIASRESFLNAMSLDISTGGSTNTILHLLAMAQEGQVDFKMSDIDLLSRKIPNLCKIAPNSDVYHMEDFHRAGGVIGLLAELNRVSLLNNNVKNILGLSLDVVLNKYDILKTKNQDVIEMFHAGPLGNKTSIPFTQSYRWKSLDKDRKKGCIRSYENAFSYDGGLAILYGNIAKNGCVVKTAGVKKGNLIFEGFAIVFESQEEALKAILENKVKKGHVVVIRYEGPKGGPGMQEMLYPTTYLKSMNLDEHCALITDGRFSGGTSGLSIGHISPEAANKGNIALIRNNDVININIPNRTINLDITNDEFLNRMHNEIQRGKSSYTPQFRKRFVSSALKMYALFATSADKGAVRKIQY.

Mg(2+) is bound at residue Asp-81. Cys-122 is a binding site for [2Fe-2S] cluster. Mg(2+) contacts are provided by Asp-123 and Lys-124. Lys-124 bears the N6-carboxylysine mark. Cys-195 contacts [2Fe-2S] cluster. Glu-491 lines the Mg(2+) pocket. Ser-517 acts as the Proton acceptor in catalysis.

It belongs to the IlvD/Edd family. In terms of assembly, homodimer. [2Fe-2S] cluster is required as a cofactor. It depends on Mg(2+) as a cofactor.

It catalyses the reaction (2R)-2,3-dihydroxy-3-methylbutanoate = 3-methyl-2-oxobutanoate + H2O. It carries out the reaction (2R,3R)-2,3-dihydroxy-3-methylpentanoate = (S)-3-methyl-2-oxopentanoate + H2O. Its pathway is amino-acid biosynthesis; L-isoleucine biosynthesis; L-isoleucine from 2-oxobutanoate: step 3/4. It participates in amino-acid biosynthesis; L-valine biosynthesis; L-valine from pyruvate: step 3/4. Its function is as follows. Functions in the biosynthesis of branched-chain amino acids. Catalyzes the dehydration of (2R,3R)-2,3-dihydroxy-3-methylpentanoate (2,3-dihydroxy-3-methylvalerate) into 2-oxo-3-methylpentanoate (2-oxo-3-methylvalerate) and of (2R)-2,3-dihydroxy-3-methylbutanoate (2,3-dihydroxyisovalerate) into 2-oxo-3-methylbutanoate (2-oxoisovalerate), the penultimate precursor to L-isoleucine and L-valine, respectively. The sequence is that of Dihydroxy-acid dehydratase from Buchnera aphidicola subsp. Schlechtendalia chinensis.